A 65-amino-acid chain; its full sequence is Large ribosomal subunit protein bL35 (65 aa).

Residues 1 to 16 (MVPKQKTHSGAKKRFK) show a composition bias toward basic residues. The disordered stretch occupies residues 1–39 (MVPKQKTHSGAKKRFKLTGSGSVSRARAGMRHNFEHRSS).

It belongs to the bacterial ribosomal protein bL35 family.

In Tropheryma whipplei (strain TW08/27) (Whipple's bacillus), this protein is Large ribosomal subunit protein bL35.